The primary structure comprises 589 residues: Aspartate--tRNA ligase (589 aa).

E176 lines the L-aspartate pocket. The aspartate stretch occupies residues 200–203; that stretch reads QLFK. L-aspartate is bound at residue R222. ATP-binding positions include 222-224 and Q231; that span reads RDE. Position 449 (H449) interacts with L-aspartate. E483 contacts ATP. Residue R490 participates in L-aspartate binding. 535-538 provides a ligand contact to ATP; the sequence is GLDR.

It belongs to the class-II aminoacyl-tRNA synthetase family. Type 1 subfamily. Homodimer.

Its subcellular location is the cytoplasm. The enzyme catalyses tRNA(Asp) + L-aspartate + ATP = L-aspartyl-tRNA(Asp) + AMP + diphosphate. Its function is as follows. Catalyzes the attachment of L-aspartate to tRNA(Asp) in a two-step reaction: L-aspartate is first activated by ATP to form Asp-AMP and then transferred to the acceptor end of tRNA(Asp). The chain is Aspartate--tRNA ligase from Enterococcus faecalis (strain ATCC 700802 / V583).